Reading from the N-terminus, the 2076-residue chain is Protein Ycf2 (2076 aa).

Residue G1458 to S1465 participates in ATP binding.

The protein belongs to the Ycf2 family.

The protein resides in the plastid. The protein localises to the chloroplast stroma. Probable ATPase of unknown function. Its presence in a non-photosynthetic plant (Epifagus virginiana) and experiments in tobacco indicate that it has an essential function which is probably not related to photosynthesis. This is Protein Ycf2 from Acorus calamus (Sweet flag).